The primary structure comprises 260 residues: Snake venom serine protease pallabin-2 (260 aa).

The N-terminal stretch at 1–18 (MVLIKVLANLLILQLSYA) is a signal peptide. Positions 19–24 (QKSSEL) are excised as a propeptide. A Peptidase S1 domain is found at 25–251 (IIGGDECNIN…HLDWIENIIA (227 aa)). 6 disulfides stabilise this stretch: Cys-31–Cys-163, Cys-50–Cys-66, Cys-98–Cys-258, Cys-142–Cys-212, Cys-174–Cys-191, and Cys-202–Cys-227. Residue His-65 is the Charge relay system of the active site. N-linked (GlcNAc...) asparagine glycosylation is present at Asn-103. Asp-110 acts as the Charge relay system in catalysis. The active-site Charge relay system is the Ser-206.

It belongs to the peptidase S1 family. Snake venom subfamily. As to quaternary structure, monomer. In terms of tissue distribution, expressed by the venom gland.

It localises to the secreted. Functionally, snake venom serine protease that may act in the hemostasis system of the prey. The sequence is that of Snake venom serine protease pallabin-2 (JZTHR7) from Gloydius halys (Chinese water mocassin).